The following is a 640-amino-acid chain: 1,4-alpha-glucan branching enzyme GlgB (640 aa).

Residue D318 is the Nucleophile of the active site. E371 functions as the Proton donor in the catalytic mechanism.

It belongs to the glycosyl hydrolase 13 family. GlgB subfamily. As to quaternary structure, monomer.

It carries out the reaction Transfers a segment of a (1-&gt;4)-alpha-D-glucan chain to a primary hydroxy group in a similar glucan chain.. The protein operates within glycan biosynthesis; glycogen biosynthesis. Catalyzes the formation of the alpha-1,6-glucosidic linkages in glycogen by scission of a 1,4-alpha-linked oligosaccharide from growing alpha-1,4-glucan chains and the subsequent attachment of the oligosaccharide to the alpha-1,6 position. This is 1,4-alpha-glucan branching enzyme GlgB from Francisella tularensis subsp. tularensis (strain FSC 198).